Here is a 319-residue protein sequence, read N- to C-terminus: Large ribosomal subunit protein eL8 (319 aa).

An N6-acetyllysine modification is found at Lys-87. Residue Lys-101 forms a Glycyl lysine isopeptide (Lys-Gly) (interchain with G-Cter in SUMO2) linkage. Lys-150 carries the N6-acetyllysine; alternate modification. Lys-150 is covalently cross-linked (Glycyl lysine isopeptide (Lys-Gly) (interchain with G-Cter in SUMO2); alternate). Lys-178 participates in a covalent cross-link: Glycyl lysine isopeptide (Lys-Gly) (interchain with G-Cter in SUMO2). An N6-acetyllysine modification is found at Lys-270. A Glycyl lysine isopeptide (Lys-Gly) (interchain with G-Cter in SUMO2) cross-link involves residue Lys-298.

The protein belongs to the eukaryotic ribosomal protein eL8 family. As to quaternary structure, component of the large ribosomal subunit. Interacts with CRY1. Interacts with DICER1, AGO2, TARBP2, MOV10 and EIF6; they form a large RNA-induced silencing complex (RISC).

The protein resides in the cytoplasm. Its function is as follows. Component of the large ribosomal subunit. The ribosome is a large ribonucleoprotein complex responsible for the synthesis of proteins in the cell. This Oryctolagus cuniculus (Rabbit) protein is Large ribosomal subunit protein eL8 (RPL7A).